The sequence spans 124 residues: Small ribosomal subunit protein uS12 (124 aa).

D89 is modified (3-methylthioaspartic acid).

This sequence belongs to the universal ribosomal protein uS12 family. As to quaternary structure, part of the 30S ribosomal subunit. Contacts proteins S8 and S17. May interact with IF1 in the 30S initiation complex.

In terms of biological role, with S4 and S5 plays an important role in translational accuracy. Interacts with and stabilizes bases of the 16S rRNA that are involved in tRNA selection in the A site and with the mRNA backbone. Located at the interface of the 30S and 50S subunits, it traverses the body of the 30S subunit contacting proteins on the other side and probably holding the rRNA structure together. The combined cluster of proteins S8, S12 and S17 appears to hold together the shoulder and platform of the 30S subunit. The sequence is that of Small ribosomal subunit protein uS12 from Shewanella loihica (strain ATCC BAA-1088 / PV-4).